A 157-amino-acid polypeptide reads, in one-letter code: ATP synthase subunit b', chloroplastic (157 aa).

A helical membrane pass occupies residues 26-43 (LMASQFLLIMLILDITFY).

The protein belongs to the ATPase B chain family. As to quaternary structure, F-type ATPases have 2 components, F(1) - the catalytic core - and F(0) - the membrane proton channel. F(1) has five subunits: alpha(3), beta(3), gamma(1), delta(1), epsilon(1). F(0) has four main subunits: a(1), b(1), b'(1) and c(10-14). The alpha and beta chains form an alternating ring which encloses part of the gamma chain. F(1) is attached to F(0) by a central stalk formed by the gamma and epsilon chains, while a peripheral stalk is formed by the delta, b and b' chains.

The protein localises to the plastid. Its subcellular location is the chloroplast thylakoid membrane. In terms of biological role, f(1)F(0) ATP synthase produces ATP from ADP in the presence of a proton or sodium gradient. F-type ATPases consist of two structural domains, F(1) containing the extramembraneous catalytic core and F(0) containing the membrane proton channel, linked together by a central stalk and a peripheral stalk. During catalysis, ATP synthesis in the catalytic domain of F(1) is coupled via a rotary mechanism of the central stalk subunits to proton translocation. Functionally, component of the F(0) channel, it forms part of the peripheral stalk, linking F(1) to F(0). The b'-subunit is a diverged and duplicated form of b found in plants and photosynthetic bacteria. The chain is ATP synthase subunit b', chloroplastic from Cyanidium caldarium (Red alga).